The following is an 862-amino-acid chain: Alanine--tRNA ligase (862 aa).

The Zn(2+) site is built by His552, His556, Cys653, and His657.

This sequence belongs to the class-II aminoacyl-tRNA synthetase family. The cofactor is Zn(2+).

The protein localises to the cytoplasm. The catalysed reaction is tRNA(Ala) + L-alanine + ATP = L-alanyl-tRNA(Ala) + AMP + diphosphate. In terms of biological role, catalyzes the attachment of alanine to tRNA(Ala) in a two-step reaction: alanine is first activated by ATP to form Ala-AMP and then transferred to the acceptor end of tRNA(Ala). Also edits incorrectly charged Ser-tRNA(Ala) and Gly-tRNA(Ala) via its editing domain. The protein is Alanine--tRNA ligase of Nitrosospira multiformis (strain ATCC 25196 / NCIMB 11849 / C 71).